The sequence spans 225 residues: Probable polyketide biosynthesis zinc-dependent hydrolase BaeB (225 aa).

Zn(2+) contacts are provided by His62, His64, Asp66, His67, His123, Asp140, and His181.

The protein belongs to the metallo-beta-lactamase superfamily. Requires Zn(2+) as cofactor.

Its subcellular location is the cytoplasm. Its pathway is antibiotic biosynthesis; bacillaene biosynthesis. Probably involved in some intermediate steps for the synthesis of the antibiotic polyketide bacillaene which is involved in secondary metabolism. This is Probable polyketide biosynthesis zinc-dependent hydrolase BaeB (baeB) from Bacillus velezensis (strain DSM 23117 / BGSC 10A6 / LMG 26770 / FZB42) (Bacillus amyloliquefaciens subsp. plantarum).